The following is a 550-amino-acid chain: Solute carrier family 22 member 11 (550 aa).

At 1 to 10 the chain is on the cytoplasmic side; it reads MAFSKLLEQA. The helical transmembrane segment at 11–31 threads the bilayer; it reads GGVGLFQTLQVLTFILPCLMI. At 32–142 the chain is on the extracellular side; it reads PSQMLLENFS…DLVCSSQGLK (111 aa). N-linked (GlcNAc...) asparagine glycosylation is found at Asn-39, Asn-56, and Asn-99. A helical membrane pass occupies residues 143 to 163; the sequence is PLSQSIFMSGILVGSFIWGLL. The Cytoplasmic segment spans residues 164-174; that stretch reads SYRFGRKPMLS. Residues 175 to 195 traverse the membrane as a helical segment; it reads WCCLQLAVAGTSTIFAPTFVI. Over 196–200 the chain is Extracellular; it reads YCGLR. A helical membrane pass occupies residues 201 to 221; sequence FVAAFGMAGIFLSSLTLMVEW. Residues 222–231 lie on the Cytoplasmic side of the membrane; it reads TTTSRRAVTM. Residues 232-252 form a helical membrane-spanning segment; sequence TVVGCAFSAGQAALGGLAFAL. At 253–256 the chain is on the extracellular side; that stretch reads RDWR. The helical transmembrane segment at 257–277 threads the bilayer; it reads TLQLAASVPFFAISLISWWLP. Residues 278–346 are Cytoplasmic-facing; that stretch reads ESARWLIIKG…FCVPVLRWRS (69 aa). The helical transmembrane segment at 347–367 threads the bilayer; the sequence is CAMLVVNFSLLISYYGLVFDL. Topologically, residues 368–378 are extracellular; the sequence is QSLGRDIFLLQ. A helical transmembrane segment spans residues 379-399; sequence ALFGAVDFLGRATTALLLSFL. Over 400–402 the chain is Cytoplasmic; sequence GRR. Residues 403–423 form a helical membrane-spanning segment; sequence TIQAGSQAMAGLAILANMLVP. Over 424 to 430 the chain is Extracellular; that stretch reads QDLQTLR. Residues 431-451 form a helical membrane-spanning segment; the sequence is VVFAVLGKGCFGISLTCLTIY. At 452 to 463 the chain is on the cytoplasmic side; sequence KAELFPTPVRMT. A helical membrane pass occupies residues 464-484; sequence ADGILHTVGRLGAMMGPLILM. Residues 485–490 lie on the Extracellular side of the membrane; that stretch reads SRQALP. Residues 491 to 511 traverse the membrane as a helical segment; that stretch reads LLPPLLYGVISIASSLVVLFF. Topologically, residues 512–550 are cytoplasmic; sequence LPETQGLPLPDTIQDLESQKSTAAQGNRQEAVTVESTSL. The tract at residues 531–550 is disordered; that stretch reads KSTAAQGNRQEAVTVESTSL.

Belongs to the major facilitator (TC 2.A.1) superfamily. Organic cation transporter (TC 2.A.1.19) family. N-glycosylated. Contains several complex-type N-glycans. Expressed in placental trophoblasts, syncytiotrophoblast and cytotrophoblast. Also located in the proximal tubules in kidneys.

It localises to the cell membrane. The protein localises to the apical cell membrane. Its subcellular location is the basal cell membrane. The enzyme catalyses estrone 3-sulfate(out) + glutarate(in) = estrone 3-sulfate(in) + glutarate(out). It carries out the reaction dehydroepiandrosterone 3-sulfate(out) = dehydroepiandrosterone 3-sulfate(in). It catalyses the reaction prostaglandin F2alpha(out) = prostaglandin F2alpha(in). The catalysed reaction is prostaglandin E2(out) = prostaglandin E2(in). Its function is as follows. Antiporter that mediates the transport of conjugated steroids and other specific organic anions at the basal membrane of syncytiotrophoblast and at the apical membrane of proximal tubule epithelial cells, in exchange for anionic compounds. May be responsible for placental absorption of fetal-derived steroid sulfates such as estrone sulfate (E1S) and the steroid hormone precursor dehydroepiandrosterone sulfate (DHEA-S), as well as clearing waste products and xenobiotics from the fetus. Maybe also be involved in placental urate homeostasis. Facilitates the renal reabsorption of organic anions such as urate and derived steroid sulfates. Organic anion glutarate acts as conteranion for E1S renal uptake. Possible transport mode may also include DHEA-S/E1S exchange. Also interacts with inorganic anions such as chloride and hydroxyl ions, therefore possible transport modes may include E1S/Cl(-), E1S/OH(-), urate/Cl(-) and urate/OH(-). Also mediates the transport of prostaglandin E2 (PGE2) and prostaglandin F2-alpha (PGF2-alpha) and may be involved in their renal excretion. Also able to uptake anionic drugs, diuretics, bile salts and ochratoxin A. Mediates the unidirectional efflux of glutamate and aspartate. Glutamate efflux down its transmembrane gradient may drive SLC22A11/OAT4-mediated placental uptake of E1S. The polypeptide is Solute carrier family 22 member 11 (Homo sapiens (Human)).